Consider the following 89-residue polypeptide: Protein S100-A8 (89 aa).

2 consecutive EF-hand domains span residues 12 to 47 and 46 to 81; these read LIDV…KFMK and MKKK…VGLE. 2 residues coordinate Zn(2+): His17 and His27. A Ca(2+)-binding site is contributed by Asp33. At Cys42 the chain carries S-nitrosocysteine. 4 residues coordinate Ca(2+): Asp59, Asn61, Asp63, and Glu70. His83 is a Zn(2+) binding site.

This sequence belongs to the S-100 family. Homodimer. Preferentially exists as a heterodimer or heterotetramer with S100A9 known as calprotectin (S100A8/A9). S100A8 interacts with AGER, ATP2A2 and with the heterodimeric complex formed by TLR4 and LY96. Calprotectin (S100A8/9) interacts with CEACAM3 and tubulin filaments in a calcium-dependent manner. Heterotetrameric calprotectin (S100A8/A9) interacts with ANXA6 and associates with tubulin filaments in activated monocytes. S100A8 and calprotectin (S100A8/9) interact with NCF2/P67PHOX, RAC1 and RAC2. Calprotectin (S100A8/9) interacts with CYBA and CYBB. Calprotectin (S100A8/9) interacts with NOS2 to form the iNOS-S100A8/A9 transnitrosylase complex. Calprotectin (S100A8/9) interacts with CD69. Found essentially in phagocytic cells.

It localises to the secreted. The protein resides in the cytoplasm. Its subcellular location is the cytoskeleton. It is found in the cell membrane. Functionally, S100A8 is a calcium- and zinc-binding protein which plays a prominent role in the regulation of inflammatory processes and immune response. It can induce neutrophil chemotaxis and adhesion. Predominantly found as calprotectin (S100A8/A9) which has a wide plethora of intra- and extracellular functions. The intracellular functions include: facilitating leukocyte arachidonic acid trafficking and metabolism, modulation of the tubulin-dependent cytoskeleton during migration of phagocytes and activation of the neutrophilic NADPH-oxidase. Also participates in regulatory T-cell differentiation together with CD69. Activates NADPH-oxidase by facilitating the enzyme complex assembly at the cell membrane, transferring arachidonic acid, an essential cofactor, to the enzyme complex and S100A8 contributes to the enzyme assembly by directly binding to NCF2/P67PHOX. The extracellular functions involve pro-inflammatory, antimicrobial, oxidant-scavenging and apoptosis-inducing activities. Its pro-inflammatory activity includes recruitment of leukocytes, promotion of cytokine and chemokine production, and regulation of leukocyte adhesion and migration. Acts as an alarmin or a danger associated molecular pattern (DAMP) molecule and stimulates innate immune cells via binding to pattern recognition receptors such as Toll-like receptor 4 (TLR4) and receptor for advanced glycation endproducts (AGER). Binding to TLR4 and AGER activates the MAP-kinase and NF-kappa-B signaling pathways resulting in the amplification of the pro-inflammatory cascade. Has antimicrobial activity towards bacteria and fungi and exerts its antimicrobial activity probably via chelation of Zn(2+) which is essential for microbial growth. Can induce cell death via autophagy and apoptosis and this occurs through the cross-talk of mitochondria and lysosomes via reactive oxygen species (ROS) and the process involves BNIP3. Can regulate neutrophil number and apoptosis by an anti-apoptotic effect; regulates cell survival via ITGAM/ITGB and TLR4 and a signaling mechanism involving MEK-ERK. Its role as an oxidant scavenger has a protective role in preventing exaggerated tissue damage by scavenging oxidants. The iNOS-S100A8/A9 transnitrosylase complex is proposed to direct selective inflammatory stimulus-dependent S-nitrosylation of multiple targets such as GAPDH, ANXA5, EZR, MSN and VIM by recognizing a [IL]-x-C-x-x-[DE] motif; S100A8 seems to contribute to S-nitrosylation site selectivity. This Bos taurus (Bovine) protein is Protein S100-A8 (S100A8).